A 495-amino-acid polypeptide reads, in one-letter code: Trimethylamine methyltransferase MttB (495 aa).

Pyl-334 is a non-standard amino acid (pyrrolysine).

Belongs to the trimethylamine methyltransferase family.

It carries out the reaction Co(I)-[trimethylamine-specific corrinoid protein] + trimethylamine + H(+) = methyl-Co(III)-[trimethylamine-specific corrinoid protein] + dimethylamine. It participates in one-carbon metabolism; methanogenesis from trimethylamine. Functionally, catalyzes the transfer of a methyl group from trimethylamine to the corrinoid cofactor of MttC. In Methanosarcina barkeri (strain Fusaro / DSM 804), this protein is Trimethylamine methyltransferase MttB (mttB).